The sequence spans 820 residues: Phenylalanine--tRNA ligase beta subunit (820 aa).

Residues 39–150 (PAPVGGVLLV…GTAAPGTPLR (112 aa)) enclose the tRNA-binding domain. A B5 domain is found at 435-510 (EVPQTITTTG…RLHGFTELPE (76 aa)). Positions 488, 494, 497, and 498 each coordinate Mg(2+). One can recognise an FDX-ACB domain in the interval 727 to 818 (SRAPAAWRDL…AVKARGWAIR (92 aa)).

The protein belongs to the phenylalanyl-tRNA synthetase beta subunit family. Type 1 subfamily. In terms of assembly, tetramer of two alpha and two beta subunits. Mg(2+) is required as a cofactor.

The protein resides in the cytoplasm. The catalysed reaction is tRNA(Phe) + L-phenylalanine + ATP = L-phenylalanyl-tRNA(Phe) + AMP + diphosphate + H(+). This is Phenylalanine--tRNA ligase beta subunit (pheT) from Deinococcus radiodurans (strain ATCC 13939 / DSM 20539 / JCM 16871 / CCUG 27074 / LMG 4051 / NBRC 15346 / NCIMB 9279 / VKM B-1422 / R1).